Consider the following 101-residue polypeptide: Small ribosomal subunit protein bS18c (101 aa).

The segment at 82-101 is disordered; that stretch reads KQFERAESTPRTPGPRTRNK.

It belongs to the bacterial ribosomal protein bS18 family. As to quaternary structure, part of the 30S ribosomal subunit.

Its subcellular location is the plastid. The protein resides in the chloroplast. This chain is Small ribosomal subunit protein bS18c, found in Platanus occidentalis (Sycamore).